Here is a 927-residue protein sequence, read N- to C-terminus: Phosphoenolpyruvate carboxylase (927 aa).

Residues H160 and K589 contribute to the active site.

It belongs to the PEPCase type 1 family. The cofactor is Mg(2+).

It catalyses the reaction oxaloacetate + phosphate = phosphoenolpyruvate + hydrogencarbonate. Its function is as follows. Forms oxaloacetate, a four-carbon dicarboxylic acid source for the tricarboxylic acid cycle. This is Phosphoenolpyruvate carboxylase from Rhodopseudomonas palustris (strain BisA53).